Consider the following 357-residue polypeptide: Putative DENN domain-containing protein 10 B (357 aa).

One can recognise a uDENN domain in the interval 1–140 (MAAAELADTQ…TKGICQSEEN (140 aa)). In terms of domain architecture, cDENN spans 159-299 (IKDIVSQFGM…PEKSESQVIQ (141 aa)). The dDENN domain occupies 301–357 (IALKTREIFTNLAPFSEVSADGEKRVLNLEALKQKRFPPATENFLYHLAAAEQMLKI).

This sequence belongs to the DENND10 family.

The protein resides in the late endosome. Its function is as follows. May be a guanine nucleotide exchange factor (GEF). The sequence is that of Putative DENN domain-containing protein 10 B from Homo sapiens (Human).